The primary structure comprises 413 residues: PAB1-binding protein 2 (413 aa).

The span at 1–23 shows a compositional bias: low complexity; sequence MSTETTKPSITTTPTTVLVSPNT. The interval 1–36 is disordered; it reads MSTETTKPSITTTPTTVLVSPNTLKRKKGEDTSEEQ. 3 consecutive KH domains span residues 66-130, 148-213, and 330-394; these read DVHL…YGMI, EISI…TFYI, and FVQQ…IMLI.

Interacts with PAB1.

Its subcellular location is the nucleus. This is PAB1-binding protein 2 (PBP2) from Saccharomyces cerevisiae (strain ATCC 204508 / S288c) (Baker's yeast).